We begin with the raw amino-acid sequence, 125 residues long: Holo-[acyl-carrier-protein] synthase (125 aa).

Residues aspartate 8 and glutamate 57 each coordinate Mg(2+).

This sequence belongs to the P-Pant transferase superfamily. AcpS family. Requires Mg(2+) as cofactor.

It is found in the cytoplasm. The catalysed reaction is apo-[ACP] + CoA = holo-[ACP] + adenosine 3',5'-bisphosphate + H(+). In terms of biological role, transfers the 4'-phosphopantetheine moiety from coenzyme A to a Ser of acyl-carrier-protein. This Natranaerobius thermophilus (strain ATCC BAA-1301 / DSM 18059 / JW/NM-WN-LF) protein is Holo-[acyl-carrier-protein] synthase.